A 187-amino-acid chain; its full sequence is Adenine phosphoribosyltransferase (187 aa).

The protein belongs to the purine/pyrimidine phosphoribosyltransferase family. As to quaternary structure, homodimer.

It localises to the cytoplasm. It carries out the reaction AMP + diphosphate = 5-phospho-alpha-D-ribose 1-diphosphate + adenine. Its pathway is purine metabolism; AMP biosynthesis via salvage pathway; AMP from adenine: step 1/1. Its function is as follows. Catalyzes a salvage reaction resulting in the formation of AMP, that is energically less costly than de novo synthesis. The protein is Adenine phosphoribosyltransferase of Burkholderia pseudomallei (strain 1106a).